A 464-amino-acid chain; its full sequence is 3-isopropylmalate dehydratase large subunit (464 aa).

Residues Cys337, Cys397, and Cys400 each contribute to the [4Fe-4S] cluster site.

The protein belongs to the aconitase/IPM isomerase family. LeuC type 1 subfamily. Heterodimer of LeuC and LeuD. The cofactor is [4Fe-4S] cluster.

It carries out the reaction (2R,3S)-3-isopropylmalate = (2S)-2-isopropylmalate. The protein operates within amino-acid biosynthesis; L-leucine biosynthesis; L-leucine from 3-methyl-2-oxobutanoate: step 2/4. Catalyzes the isomerization between 2-isopropylmalate and 3-isopropylmalate, via the formation of 2-isopropylmaleate. In Bacillus mycoides (strain KBAB4) (Bacillus weihenstephanensis), this protein is 3-isopropylmalate dehydratase large subunit.